A 110-amino-acid polypeptide reads, in one-letter code: DNA-binding protein Mlab_1482 (110 aa).

Belongs to the PDCD5 family.

The protein is DNA-binding protein Mlab_1482 of Methanocorpusculum labreanum (strain ATCC 43576 / DSM 4855 / Z).